Here is a 202-residue protein sequence, read N- to C-terminus: uncharacterized protein (202 aa).

The next 3 helical transmembrane spans lie at 34–54 (AAYV…QARI), 102–122 (MGVA…PLVI), and 125–145 (ILPL…FNKA). The disordered stretch occupies residues 165–202 (NKPAAAVTGTSSNSNNASAKSDGPTITELNENETEKSS). Over residues 168-185 (AAAVTGTSSNSNNASAKS) the composition is skewed to low complexity. Residues Ser-185 and Ser-201 each carry the phosphoserine modification.

This sequence belongs to the PHO88 family.

Its subcellular location is the endoplasmic reticulum membrane. This is an uncharacterized protein from Schizosaccharomyces pombe (strain 972 / ATCC 24843) (Fission yeast).